We begin with the raw amino-acid sequence, 173 residues long: Large ribosomal subunit protein uL5 (173 aa).

The protein belongs to the universal ribosomal protein uL5 family. As to quaternary structure, component of the large ribosomal subunit.

The protein resides in the nucleus. Its subcellular location is the cytoplasm. In terms of biological role, component of the ribosome, a large ribonucleoprotein complex responsible for the synthesis of proteins in the cell. The small ribosomal subunit (SSU) binds messenger RNAs (mRNAs) and translates the encoded message by selecting cognate aminoacyl-transfer RNA (tRNA) molecules. The large subunit (LSU) contains the ribosomal catalytic site termed the peptidyl transferase center (PTC), which catalyzes the formation of peptide bonds, thereby polymerizing the amino acids delivered by tRNAs into a polypeptide chain. The nascent polypeptides leave the ribosome through a tunnel in the LSU and interact with protein factors that function in enzymatic processing, targeting, and the membrane insertion of nascent chains at the exit of the ribosomal tunnel. The chain is Large ribosomal subunit protein uL5 (RPL11) from Encephalitozoon cuniculi (strain GB-M1) (Microsporidian parasite).